Here is a 180-residue protein sequence, read N- to C-terminus: Large ribosomal subunit protein uL5 (180 aa).

This sequence belongs to the universal ribosomal protein uL5 family. In terms of assembly, part of the 50S ribosomal subunit; part of the 5S rRNA/L5/L18/L25 subcomplex. Contacts the 5S rRNA and the P site tRNA. Forms a bridge to the 30S subunit in the 70S ribosome.

This is one of the proteins that bind and probably mediate the attachment of the 5S RNA into the large ribosomal subunit, where it forms part of the central protuberance. In the 70S ribosome it contacts protein S13 of the 30S subunit (bridge B1b), connecting the 2 subunits; this bridge is implicated in subunit movement. Contacts the P site tRNA; the 5S rRNA and some of its associated proteins might help stabilize positioning of ribosome-bound tRNAs. This chain is Large ribosomal subunit protein uL5, found in Spiroplasma kunkelii.